The primary structure comprises 738 residues: Elongation factor G, mitochondrial (738 aa).

The segment at 1-20 is disordered; sequence MCIGPAPTPETEEELPPSPQ. Residues 32-320 enclose the tr-type G domain; it reads RFQRNIGVSA…GVCAYLPNPA (289 aa). Residues 41 to 48, 118 to 122, and 172 to 175 contribute to the GTP site; these read AHIDSGKT, DTPGH, and NKMD.

The protein belongs to the TRAFAC class translation factor GTPase superfamily. Classic translation factor GTPase family. EF-G/EF-2 subfamily.

The protein localises to the mitochondrion. It participates in protein biosynthesis; polypeptide chain elongation. Functionally, mitochondrial GTPase that catalyzes the GTP-dependent ribosomal translocation step during translation elongation. During this step, the ribosome changes from the pre-translocational (PRE) to the post-translocational (POST) state as the newly formed A-site-bound peptidyl-tRNA and P-site-bound deacylated tRNA move to the P and E sites, respectively. Catalyzes the coordinated movement of the two tRNA molecules, the mRNA and conformational changes in the ribosome. In Laccaria bicolor (strain S238N-H82 / ATCC MYA-4686) (Bicoloured deceiver), this protein is Elongation factor G, mitochondrial.